Here is a 120-residue protein sequence, read N- to C-terminus: Aspartate 1-decarboxylase (120 aa).

Residue serine 25 is the Schiff-base intermediate with substrate; via pyruvic acid of the active site. Serine 25 is modified (pyruvic acid (Ser)). Threonine 57 provides a ligand contact to substrate. Tyrosine 58 functions as the Proton donor in the catalytic mechanism. 73–75 provides a ligand contact to substrate; that stretch reads GAA.

This sequence belongs to the PanD family. In terms of assembly, heterooctamer of four alpha and four beta subunits. Pyruvate serves as cofactor. Post-translationally, is synthesized initially as an inactive proenzyme, which is activated by self-cleavage at a specific serine bond to produce a beta-subunit with a hydroxyl group at its C-terminus and an alpha-subunit with a pyruvoyl group at its N-terminus.

It is found in the cytoplasm. The catalysed reaction is L-aspartate + H(+) = beta-alanine + CO2. The protein operates within cofactor biosynthesis; (R)-pantothenate biosynthesis; beta-alanine from L-aspartate: step 1/1. Functionally, catalyzes the pyruvoyl-dependent decarboxylation of aspartate to produce beta-alanine. The polypeptide is Aspartate 1-decarboxylase (Coprothermobacter proteolyticus (strain ATCC 35245 / DSM 5265 / OCM 4 / BT)).